The primary structure comprises 422 residues: 3-phosphoshikimate 1-carboxyvinyltransferase (422 aa).

3 residues coordinate 3-phosphoshikimate: Lys20, Ser21, and Arg25. Phosphoenolpyruvate is bound at residue Lys20. The phosphoenolpyruvate site is built by Gly90 and Arg118. 3-phosphoshikimate-binding residues include Ser161, Ser162, Gln163, Ser189, Asp305, and Lys332. Gln163 lines the phosphoenolpyruvate pocket. The active-site Proton acceptor is the Asp305. Residues Arg336 and Arg378 each coordinate phosphoenolpyruvate.

The protein belongs to the EPSP synthase family. In terms of assembly, monomer.

It is found in the cytoplasm. The catalysed reaction is 3-phosphoshikimate + phosphoenolpyruvate = 5-O-(1-carboxyvinyl)-3-phosphoshikimate + phosphate. It functions in the pathway metabolic intermediate biosynthesis; chorismate biosynthesis. Functionally, catalyzes the transfer of the enolpyruvyl moiety of phosphoenolpyruvate (PEP) to the 5-hydroxyl of shikimate-3-phosphate (S3P) to produce enolpyruvyl shikimate-3-phosphate and inorganic phosphate. The polypeptide is 3-phosphoshikimate 1-carboxyvinyltransferase (Nitrosopumilus maritimus (strain SCM1)).